Reading from the N-terminus, the 419-residue chain is MSSREYDDLSHAFAGAGGGLLSMTLTYPLVTLTTHAQTMVRLKKNEEEEKENSNEDGSLSPKSSNTSNISQKKISQFEILKKILKDQGAKGLYNGLESALFGIAVTNFVYYYFYELTGKTLSRRSNPQTTSGSKKVTLKKGLSVWQSMAAGAVAGTISRVATNPIWVANTRMTILSKNQGKLGKLNTIEAIIYILKNEGWQKLFTGIVPALFLVLNPIIQYTIFEQLKSFIVKIKKRNVTPVDALLLGAFGKLIATIITYPYITLRSRMHVKSMTENNEDSEKERTDSVQSLPEDGSDEDNSKENPYAETINKIISKLPSPIVSMFIIGYKMYKEEGVSSFYRGLSVKLLQSILNAAFLFYFKEELLILSDAIIKSTKRVTGLANNPYNAKDVIHSFEKALCMRNPRSRTTTVPQTNEE.

Solcar repeat units follow at residues 6–120, 142–230, and 239–369; these read YDDL…TGKT, LSVW…LKSF, and VTPV…LLIL. Residues 12 to 32 form a helical membrane-spanning segment; it reads AFAGAGGGLLSMTLTYPLVTL. Positions 44–53 are enriched in basic and acidic residues; it reads KNEEEEKENS. The interval 44–69 is disordered; sequence KNEEEEKENSNEDGSLSPKSSNTSNI. Polar residues predominate over residues 56-69; the sequence is DGSLSPKSSNTSNI. The next 3 helical transmembrane spans lie at 98-118, 204-224, and 245-265; these read SALF…ELTG, FTGI…YTIF, and LLLG…YITL. Positions 274–305 are disordered; sequence MTENNEDSEKERTDSVQSLPEDGSDEDNSKEN. The next 2 helical transmembrane spans lie at 310–330 and 349–369; these read TINK…IIGY and LLQS…LLIL.

It belongs to the mitochondrial carrier (TC 2.A.29) family.

The protein localises to the peroxisome membrane. Its function is as follows. May have transport activity. The protein is Peroxisomal membrane protein PMP47B (PMP47B) of Candida boidinii (Yeast).